The primary structure comprises 571 residues: NADH-quinone oxidoreductase subunit C/D (571 aa).

An NADH dehydrogenase I subunit C region spans residues M1 to R171. The NADH dehydrogenase I subunit D stretch occupies residues A194 to R571.

It in the N-terminal section; belongs to the complex I 30 kDa subunit family. This sequence in the C-terminal section; belongs to the complex I 49 kDa subunit family. In terms of assembly, NDH-1 is composed of 13 different subunits. Subunits NuoB, CD, E, F, and G constitute the peripheral sector of the complex.

Its subcellular location is the cell inner membrane. It carries out the reaction a quinone + NADH + 5 H(+)(in) = a quinol + NAD(+) + 4 H(+)(out). In terms of biological role, NDH-1 shuttles electrons from NADH, via FMN and iron-sulfur (Fe-S) centers, to quinones in the respiratory chain. The immediate electron acceptor for the enzyme in this species is believed to be ubiquinone. Couples the redox reaction to proton translocation (for every two electrons transferred, four hydrogen ions are translocated across the cytoplasmic membrane), and thus conserves the redox energy in a proton gradient. The polypeptide is NADH-quinone oxidoreductase subunit C/D (nuoC) (Hydrogenobaculum sp. (strain Y04AAS1)).